We begin with the raw amino-acid sequence, 284 residues long: Bifunctional protein FolD (284 aa).

NADP(+) contacts are provided by residues 165–167 (GAS), Ser190, and Ile231.

This sequence belongs to the tetrahydrofolate dehydrogenase/cyclohydrolase family. Homodimer.

It catalyses the reaction (6R)-5,10-methylene-5,6,7,8-tetrahydrofolate + NADP(+) = (6R)-5,10-methenyltetrahydrofolate + NADPH. The catalysed reaction is (6R)-5,10-methenyltetrahydrofolate + H2O = (6R)-10-formyltetrahydrofolate + H(+). The protein operates within one-carbon metabolism; tetrahydrofolate interconversion. Functionally, catalyzes the oxidation of 5,10-methylenetetrahydrofolate to 5,10-methenyltetrahydrofolate and then the hydrolysis of 5,10-methenyltetrahydrofolate to 10-formyltetrahydrofolate. The chain is Bifunctional protein FolD from Polynucleobacter asymbioticus (strain DSM 18221 / CIP 109841 / QLW-P1DMWA-1) (Polynucleobacter necessarius subsp. asymbioticus).